A 190-amino-acid chain; its full sequence is Holliday junction branch migration complex subunit RuvA (190 aa).

The interval 1–64 (MIGRITGTLI…EDAQLLYGFG (64 aa)) is domain I. Residues 65–137 (SSAERSTFRE…MRGKLGADIG (73 aa)) are domain II. The segment at 137–141 (GATPH) is flexible linker. The segment at 142–190 (AASGHQSDILNALLALGYSDKESQAALKKLPDGVDVSEGIRLALKALVR) is domain III.

It belongs to the RuvA family. In terms of assembly, homotetramer. Forms an RuvA(8)-RuvB(12)-Holliday junction (HJ) complex. HJ DNA is sandwiched between 2 RuvA tetramers; dsDNA enters through RuvA and exits via RuvB. An RuvB hexamer assembles on each DNA strand where it exits the tetramer. Each RuvB hexamer is contacted by two RuvA subunits (via domain III) on 2 adjacent RuvB subunits; this complex drives branch migration. In the full resolvosome a probable DNA-RuvA(4)-RuvB(12)-RuvC(2) complex forms which resolves the HJ.

Its subcellular location is the cytoplasm. Functionally, the RuvA-RuvB-RuvC complex processes Holliday junction (HJ) DNA during genetic recombination and DNA repair, while the RuvA-RuvB complex plays an important role in the rescue of blocked DNA replication forks via replication fork reversal (RFR). RuvA specifically binds to HJ cruciform DNA, conferring on it an open structure. The RuvB hexamer acts as an ATP-dependent pump, pulling dsDNA into and through the RuvAB complex. HJ branch migration allows RuvC to scan DNA until it finds its consensus sequence, where it cleaves and resolves the cruciform DNA. The protein is Holliday junction branch migration complex subunit RuvA of Bordetella pertussis (strain Tohama I / ATCC BAA-589 / NCTC 13251).